We begin with the raw amino-acid sequence, 420 residues long: MQELSQLGGYFQKLAAGGFVINPSSSSSSSNNSSSNTSSSNFLSPYEYQESSTSPRDTTDSSGESSLSSSGSSSSLNGSCNVAAKLIKFRGHNVAAFDINGKEMICLPQVYEVFLKNMVGGLHTVYTKLKRLYIHPMVCNVEQVRALRSLGAIQPGVNRCKLLKTSDFEKLYDDCTSTCTRPGRPSKRSFDDWNNGAVIIKKDKTDSEPVNGPVFNQLMQPQMTPQQILMQHFVALSQKTKNSFERADDDDQNQRDADDITPLNLSKSGGNSENDSDSLENMRKEDSSPNTSVSDRGGSNSNSLSMSMEAGSSSSSGKNDEASMMNKVMSLIELASQQFKHEREELWKERSEIQVLRESFHKIVQEERDLRKKLETQNKKCTAFEKRYKYVKKQLLLANADLRRYKEKEEQSSDGNSVEL.

The interval 23 to 77 (PSSSSSSSNNSSSNTSSSNFLSPYEYQESSTSPRDTTDSSGESSLSSSGSSSSLN) is disordered. Low complexity-rich tracts occupy residues 24 to 41 (SSSS…SSSN) and 51 to 77 (SSTS…SSLN). Residues 85–171 (KLIKFRGHNV…LLKTSDFEKL (87 aa)) form a DACHbox-N region. The segment covering 242–258 (NSFERADDDDQNQRDAD) has biased composition (basic and acidic residues). The segment at 242-321 (NSFERADDDD…SSSSSGKNDE (80 aa)) is disordered. Over residues 263–273 (LNLSKSGGNSE) the composition is skewed to polar residues. Residues 297–317 (GGSNSNSLSMSMEAGSSSSSG) show a composition bias toward low complexity.

The protein belongs to the DACH/dachshund family. As to expression, expressed in AFD, AWC, ASE and ASK neurons. Expressed in the alae.

Its subcellular location is the nucleus. Its function is as follows. Transcription factor. Plays a role in the thermotactic response. The sequence is that of Dachshund homolog dac-1 from Caenorhabditis elegans.